The following is an 82-amino-acid chain: Acyl carrier protein (82 aa).

The Carrier domain maps to 4–79; it reads PEMESRLKKI…DALNYIEQKL (76 aa). Serine 39 carries the post-translational modification O-(pantetheine 4'-phosphoryl)serine.

It belongs to the acyl carrier protein (ACP) family. 4'-phosphopantetheine is transferred from CoA to a specific serine of apo-ACP by AcpS. This modification is essential for activity because fatty acids are bound in thioester linkage to the sulfhydryl of the prosthetic group.

The protein localises to the cytoplasm. Its pathway is lipid metabolism; fatty acid biosynthesis. Functionally, carrier of the growing fatty acid chain in fatty acid biosynthesis. The chain is Acyl carrier protein from Roseiflexus sp. (strain RS-1).